We begin with the raw amino-acid sequence, 86 residues long: Small ribosomal subunit protein bS20 (86 aa).

Over residues 1–18 the composition is skewed to basic and acidic residues; it reads MANIKSQEKRIRTNERAR. Residues 1 to 25 are disordered; sequence MANIKSQEKRIRTNERARLRNQATK.

The protein belongs to the bacterial ribosomal protein bS20 family.

Functionally, binds directly to 16S ribosomal RNA. The polypeptide is Small ribosomal subunit protein bS20 (Mycobacteroides abscessus (strain ATCC 19977 / DSM 44196 / CCUG 20993 / CIP 104536 / JCM 13569 / NCTC 13031 / TMC 1543 / L948) (Mycobacterium abscessus)).